The sequence spans 93 residues: Small ribosomal subunit protein uS19 (93 aa).

This sequence belongs to the universal ribosomal protein uS19 family.

Protein S19 forms a complex with S13 that binds strongly to the 16S ribosomal RNA. The polypeptide is Small ribosomal subunit protein uS19 (Syntrophus aciditrophicus (strain SB)).